Consider the following 379-residue polypeptide: dTDP-3-amino-3,4,6-trideoxy-alpha-D-glucose transaminase (379 aa).

Pyridoxal 5'-phosphate contacts are provided by residues glycine 67, glutamine 167, 188–193 (SFYPGK), tyrosine 221, tyrosine 227, 235–237 (NSR), and tyrosine 318. The residue at position 193 (lysine 193) is an N6-(pyridoxal phosphate)lysine.

Belongs to the degT/dnrJ/eryC1 family. Homodimer. It depends on pyridoxal 5'-phosphate as a cofactor.

The catalysed reaction is dTDP-3-amino-3,4,6-trideoxy-alpha-D-glucose + 2-oxoglutarate = dTDP-3-dehydro-4,6-dideoxy-alpha-D-glucose + L-glutamate. It participates in antibiotic biosynthesis. Its function is as follows. Involved in the biosynthesis of dTDP-alpha-D-desosamine, a sugar found in several bacterial macrolide antibiotics. Catalyzes the reversible transfer of the amino group from L-glutamate to the C-3 position of dTDP-3-keto-4,6-deoxyglucose to yield dTDP-3-amino-3,4,6-trideoxyglucose. This chain is dTDP-3-amino-3,4,6-trideoxy-alpha-D-glucose transaminase, found in Streptomyces venezuelae.